Consider the following 123-residue polypeptide: ATP synthase epsilon chain (123 aa).

The protein belongs to the ATPase epsilon chain family. As to quaternary structure, F-type ATPases have 2 components, CF(1) - the catalytic core - and CF(0) - the membrane proton channel. CF(1) has five subunits: alpha(3), beta(3), gamma(1), delta(1), epsilon(1). CF(0) has three main subunits: a, b and c.

It localises to the cell inner membrane. In terms of biological role, produces ATP from ADP in the presence of a proton gradient across the membrane. The chain is ATP synthase epsilon chain from Helicobacter acinonychis (strain Sheeba).